Consider the following 470-residue polypeptide: Cell division protein FtsP (470 aa).

The segment at residues 1-27 (MSFSRRQFLQASGIALCAGAIPLRANA) is a signal peptide (tat-type signal). A Plastocyanin-like domain is found at 222-287 (VEVSRGWVRL…RREILVDMTN (66 aa)).

Belongs to the FtsP family. Predicted to be exported by the Tat system. The position of the signal peptide cleavage has not been experimentally proven.

The protein resides in the periplasm. Functionally, cell division protein that is required for growth during stress conditions. May be involved in protecting or stabilizing the divisomal assembly under conditions of stress. The sequence is that of Cell division protein FtsP from Salmonella typhi.